The sequence spans 439 residues: Ribosomal protein uS12 methylthiotransferase RimO (439 aa).

The region spanning 3–115 (NKLHIVSLGC…IDELLVEKKS (113 aa)) is the MTTase N-terminal domain. [4Fe-4S] cluster contacts are provided by C12, C46, C78, C146, C150, and C153. A Radical SAM core domain is found at 132–361 (TGSTYHAYIK…GKIAADVMQA (230 aa)).

The protein belongs to the methylthiotransferase family. RimO subfamily. The cofactor is [4Fe-4S] cluster.

It is found in the cytoplasm. The enzyme catalyses L-aspartate(89)-[ribosomal protein uS12]-hydrogen + (sulfur carrier)-SH + AH2 + 2 S-adenosyl-L-methionine = 3-methylsulfanyl-L-aspartate(89)-[ribosomal protein uS12]-hydrogen + (sulfur carrier)-H + 5'-deoxyadenosine + L-methionine + A + S-adenosyl-L-homocysteine + 2 H(+). In terms of biological role, catalyzes the methylthiolation of an aspartic acid residue of ribosomal protein uS12. The protein is Ribosomal protein uS12 methylthiotransferase RimO of Sulfurimonas denitrificans (strain ATCC 33889 / DSM 1251) (Thiomicrospira denitrificans (strain ATCC 33889 / DSM 1251)).